Consider the following 351-residue polypeptide: 3-dehydroquinate synthase (351 aa).

Residues 126–127 (TT), K138, and K147 each bind NAD(+). Residues E180, H244, and H260 each contribute to the Zn(2+) site.

This sequence belongs to the sugar phosphate cyclases superfamily. Dehydroquinate synthase family. Co(2+) serves as cofactor. Requires Zn(2+) as cofactor. NAD(+) is required as a cofactor.

It is found in the cytoplasm. The enzyme catalyses 7-phospho-2-dehydro-3-deoxy-D-arabino-heptonate = 3-dehydroquinate + phosphate. The protein operates within metabolic intermediate biosynthesis; chorismate biosynthesis; chorismate from D-erythrose 4-phosphate and phosphoenolpyruvate: step 2/7. Functionally, catalyzes the conversion of 3-deoxy-D-arabino-heptulosonate 7-phosphate (DAHP) to dehydroquinate (DHQ). This Exiguobacterium sp. (strain ATCC BAA-1283 / AT1b) protein is 3-dehydroquinate synthase.